Consider the following 320-residue polypeptide: UDP-3-O-acyl-N-acetylglucosamine deacetylase (320 aa).

His92, His251, and Asp255 together coordinate Zn(2+). His278 acts as the Proton donor in catalysis.

It belongs to the LpxC family. It depends on Zn(2+) as a cofactor.

It catalyses the reaction a UDP-3-O-[(3R)-3-hydroxyacyl]-N-acetyl-alpha-D-glucosamine + H2O = a UDP-3-O-[(3R)-3-hydroxyacyl]-alpha-D-glucosamine + acetate. It participates in glycolipid biosynthesis; lipid IV(A) biosynthesis; lipid IV(A) from (3R)-3-hydroxytetradecanoyl-[acyl-carrier-protein] and UDP-N-acetyl-alpha-D-glucosamine: step 2/6. Its function is as follows. Catalyzes the hydrolysis of UDP-3-O-myristoyl-N-acetylglucosamine to form UDP-3-O-myristoylglucosamine and acetate, the committed step in lipid A biosynthesis. The polypeptide is UDP-3-O-acyl-N-acetylglucosamine deacetylase (Psychrobacter cryohalolentis (strain ATCC BAA-1226 / DSM 17306 / VKM B-2378 / K5)).